The chain runs to 113 residues: uncharacterized protein (113 aa).

The CHY-type; degenerate zinc finger occupies Leu16 to His96. 8 residues coordinate Zn(2+): Cys23, His25, Cys46, Cys49, Cys73, Cys76, Cys91, and Cys94.

The protein localises to the cytoplasm. The protein resides in the nucleus. This is an uncharacterized protein from Schizosaccharomyces pombe (strain 972 / ATCC 24843) (Fission yeast).